Consider the following 381-residue polypeptide: Alkanesulfonate monooxygenase (381 aa).

It belongs to the SsuD family. Homotetramer.

The enzyme catalyses an alkanesulfonate + FMNH2 + O2 = an aldehyde + FMN + sulfite + H2O + 2 H(+). Its function is as follows. Catalyzes the desulfonation of aliphatic sulfonates. The protein is Alkanesulfonate monooxygenase of Escherichia coli O8 (strain IAI1).